A 356-amino-acid polypeptide reads, in one-letter code: Popeye domain-containing protein 1 (356 aa).

Residues 1-48 are Extracellular-facing; that stretch reads MNFTEPSPLAQSTVVGFLPELESLTPVPSNETSCENWREVHHLVFHAA. N-linked (GlcNAc...) asparagine glycans are attached at residues asparagine 2 and asparagine 30. A helical transmembrane segment spans residues 49-69; it reads NVCFAVGLLIPTTLHLHMILL. Position 70 (arginine 70) is a topological domain, cytoplasmic. A helical transmembrane segment spans residues 71–91; the sequence is VMLSIGCTLYVVWATLYRCAL. Aspartate 92 is a topological domain (extracellular). Residues 93–113 form a helical membrane-spanning segment; sequence MMIWNSVFLGINILHLSYLLY. The required for interaction with CAV3 stretch occupies residues 93 to 115; it reads MMIWNSVFLGINILHLSYLLYKK. Over 114–356 the chain is Cytoplasmic; the sequence is KKRPVKIEKD…VPVSPAHQLP (243 aa). Residues 136 to 186 form a required for interaction with KCNK2 region; sequence RVPPDLFRRLTGQFCVIQTLKRGQVYATEDKTSVDDRLSILLKGRMKVSYR. 2 positions are modified to phosphoserine: serine 295 and serine 318. Over residues 313-323 the composition is skewed to low complexity; the sequence is SSSTASLPMSS. The tract at residues 313-356 is disordered; the sequence is SSSTASLPMSSPQQRASPKMKPIEEGLEDDDEVFVPVSPAHQLP.

This sequence belongs to the popeye family. Homodimer. Homodimerization requires the C-terminus cytoplasmic region. Interacts (via the C-terminus cytoplasmic tail) with TJP1. Interacts (via the C-terminus cytoplasmic tail) with ARHGEF25/GEFT (via the DH domain). Interacts (via the C-terminus cytoplasmic tail) with VAMP3. Interacts with KCNK2; the interaction enhances KCNK2 surface expression and is inhibited by cAMP. Interacts with CAV3. In terms of tissue distribution, strongly expressed in heart and skeletal muscle. Weakly expressed in brain, spleen, liver, kidney and lung.

It localises to the lateral cell membrane. The protein resides in the cell junction. Its subcellular location is the tight junction. It is found in the membrane. The protein localises to the cell membrane. It localises to the sarcolemma. The protein resides in the caveola. Its function is as follows. Cell adhesion molecule involved in the establishment and/or maintenance of cell integrity. Involved in the formation and regulation of the tight junction (TJ) paracellular permeability barrier in epithelial cells. Plays a role in VAMP3-mediated vesicular transport and recycling of different receptor molecules through its interaction with VAMP3. Plays a role in the regulation of cell shape and movement by modulating the Rho-family GTPase activity through its interaction with ARHGEF25/GEFT. Induces primordial adhesive contact and aggregation of epithelial cells in a Ca(2+)-independent manner. Important for skeletal muscle and heart development. Also involved in striated muscle regeneration and repair and in the regulation of cell spreading. Important for the maintenance of cardiac function. Plays a regulatory function in heart rate dynamics mediated, at least in part, through cAMP-binding and, probably, by increasing cell surface expression of the potassium channel KCNK2 and enhancing current density. Is a caveolae-associated protein important for the preservation of caveolae structural and functional integrity as well as for heart protection against ischemia injury. This is Popeye domain-containing protein 1 (Popdc1) from Rattus norvegicus (Rat).